Reading from the N-terminus, the 1186-residue chain is DNA excision repair protein ERCC-5 (1186 aa).

Residues 1 to 78 (MGVQGLWKLL…RIRPIFVFDG (78 aa)) are N-domain. Lysine 8 bears the N6-acetyllysine mark. Residue aspartate 30 coordinates Mg(2+). The tract at residues 31–67 (ISIWLNQALKGVRDRHGNSIENPHLLTLFHRLCKLLF) is DNA-binding; may bind to the undamaged single-strand DNA of the DNA repair bubble. Residue aspartate 77 participates in Mg(2+) binding. The segment at 79 to 785 (DAPLLKKQTL…LRLFGIPYIQ (707 aa)) is spacer region. Disordered stretches follow at residues 306 to 342 (ESLPSSSKMHGMSFDVKSSPCEKLKTEKEPDATPPSP), 354 to 385 (GSSSEEELESENRRQARGRNAPAAVDEGSISP), 404 to 473 (CAGD…SVPK), 510 to 533 (HSDAPGLPNGRELTPASPTCTNSV), and 667 to 724 (QAEF…AEDS). Over residues 325–336 (PCEKLKTEKEPD) the composition is skewed to basic and acidic residues. Residue serine 384 is modified to Phosphoserine. Positions 454–472 (AEEHVASTNEGREPTDSVP) are enriched in basic and acidic residues. Position 705 is a phosphoserine (serine 705). An I-domain region spans residues 786–881 (APMEAEAQCA…VTAMEILNEF (96 aa)). Residues glutamate 789, glutamate 791, aspartate 810, and aspartate 812 each coordinate Mg(2+). Positions 820–836 (HVYRNFFNKNKFVEYYQ) are DNA-binding; may bind to the undamaged single-strand DNA of the DNA repair bubble. A DNA-binding; H2TH (helix-2turn-helix) motif which binds double-stranded DNA region spans residues 848-880 (RNKLINLAYLLGSDYTEGIPTVGCVTAMEILNE). A Mg(2+)-binding site is contributed by aspartate 861. A DNA-binding; may bind double-stranded DNA region spans residues 912-918 (TKVKKKL). The tract at residues 981-1009 (LKQLDAQQTQLRIDSFFRLAQQEKEDAKR) is interaction with PCNA. Residues 1011–1186 (KSQRLNRAVT…RRARGRKRKT (176 aa)) are interaction with ERCC6/CSB. Disordered regions lie at residues 1056–1081 (QKRGITNTLEESSSLKRKRLSDSKGK) and 1095–1186 (ESSD…KRKT). The Nuclear localization signal 1 signature appears at 1057 to 1074 (KRGITNTLEESSSLKRKR). Over residues 1124-1133 (TSASDSQNSV) the composition is skewed to polar residues. Positions 1169 to 1186 (FGKKRRKLRRARGRKRKT) match the Nuclear localization signal 2 motif. A compositionally biased stretch (basic residues) spans 1169–1186 (FGKKRRKLRRARGRKRKT).

Belongs to the XPG/RAD2 endonuclease family. XPG subfamily. Monomer. Homodimer. Component of the homologous recombination repair (HR) complex composed of ERCC5/XPG, BRCA2, PALB2, DSS1 and RAD51. Within the complex, interacts with BRCA2 and PALB2. Interacts with RNA polymerase II. Interacts (via C-terminus) with ERCC6/CSB; the interaction stimulates ERCC6/CSB binding to the DNA repair bubble and ERCC6/CSB ATPase activity. May form a complex composed of RNA polymerase II, ERCC6/CSB and ERCC5/XPG which associates with the DNA repair bubble during transcription-coupled nucleotide excision repair. Interacts with BRCA1; the interaction promotes the release of BRCA1 from DNA. Interacts with PCNA. Interacts with NTHL1; the interaction stimulates NTHL1 activity and NTHL1 binding to its DNA substrate. It depends on Mg(2+) as a cofactor.

The protein resides in the nucleus. It localises to the chromosome. Single-stranded structure-specific DNA endonuclease involved in DNA excision repair. Makes the 3'incision in DNA nucleotide excision repair (NER). Binds and bends DNA repair bubble substrate and breaks base stacking at the single-strand/double-strand DNA junction of the DNA bubble. Plays a role in base excision repair (BER) by promoting the binding of DNA glycosylase NTHL1 to its substrate and increasing NTHL1 catalytic activity that removes oxidized pyrimidines from DNA. Involved in transcription-coupled nucleotide excision repair (TCR) which allows RNA polymerase II-blocking lesions to be rapidly removed from the transcribed strand of active genes. Functions during the initial step of TCR in cooperation with ERCC6/CSB to recognized stalled RNA polymerase II. Also, stimulates ERCC6/CSB binding to the DNA repair bubble and ERCC6/CSB ATPase activity. Required for DNA replication fork maintenance and preservation of genomic stability. Involved in homologous recombination repair (HRR) induced by DNA replication stress by recruiting RAD51, BRCA2, and PALB2 to the damaged DNA site. In TFIIH stimulates the 5'-3' helicase activity of XPD/ERCC2 and the DNA translocase activity of XPB/ERCC3. During HRR, binds to the replication fork with high specificity and stabilizes it. Also, acts upstream of HRR, to promote the release of BRCA1 from DNA. The polypeptide is DNA excision repair protein ERCC-5 (ERCC5) (Homo sapiens (Human)).